The sequence spans 203 residues: Imidazoleglycerol-phosphate dehydratase (203 aa).

The protein belongs to the imidazoleglycerol-phosphate dehydratase family.

Its subcellular location is the cytoplasm. The enzyme catalyses D-erythro-1-(imidazol-4-yl)glycerol 3-phosphate = 3-(imidazol-4-yl)-2-oxopropyl phosphate + H2O. Its pathway is amino-acid biosynthesis; L-histidine biosynthesis; L-histidine from 5-phospho-alpha-D-ribose 1-diphosphate: step 6/9. This Salinispora arenicola (strain CNS-205) protein is Imidazoleglycerol-phosphate dehydratase.